Here is a 121-residue protein sequence, read N- to C-terminus: Large ribosomal subunit protein bL12 (121 aa).

Belongs to the bacterial ribosomal protein bL12 family. As to quaternary structure, homodimer. Part of the ribosomal stalk of the 50S ribosomal subunit. Forms a multimeric L10(L12)X complex, where L10 forms an elongated spine to which 2 to 4 L12 dimers bind in a sequential fashion. Binds GTP-bound translation factors.

Functionally, forms part of the ribosomal stalk which helps the ribosome interact with GTP-bound translation factors. Is thus essential for accurate translation. This is Large ribosomal subunit protein bL12 from Tremblaya princeps.